Consider the following 165-residue polypeptide: MEDLLVVGQIINTHGLRGEMKVMPLTEDMRRFDYLEYVILKGQKIKVEGVKYFKDKVILKLQGINSIEEAEKLKRTYLEIEREDAIELEEDEYFIVDLVGCTVVDTEGFEYGKIKDVIQTPSNDVYWVQGKKEVLVPVLKDIVLDINMDEKLITIRPSGEWQYED.

The 72-residue stretch at 90 to 161 (EDEYFIVDLV…LITIRPSGEW (72 aa)) folds into the PRC barrel domain.

Belongs to the RimM family. In terms of assembly, binds ribosomal protein uS19.

It is found in the cytoplasm. An accessory protein needed during the final step in the assembly of 30S ribosomal subunit, possibly for assembly of the head region. Essential for efficient processing of 16S rRNA. May be needed both before and after RbfA during the maturation of 16S rRNA. It has affinity for free ribosomal 30S subunits but not for 70S ribosomes. The chain is Ribosome maturation factor RimM from Clostridium perfringens (strain SM101 / Type A).